The sequence spans 680 residues: Translation factor GUF1 homolog, chloroplastic (680 aa).

The N-terminal 51 residues, 1–51 (MATATASRLAVPAPRTSPQAPGRRRPAAPLPSAPPRPRALSAAPRGRVVCP), are a transit peptide targeting the chloroplast. A disordered region spans residues 1 to 68 (MATATASRLA…ASTTDAGQDR (68 aa)). Positions 28–37 (APLPSAPPRP) are enriched in pro residues. The segment covering 38–60 (RALSAAPRGRVVCPAAPASSPAS) has biased composition (low complexity). The tr-type G domain occupies 75 to 256 (SNIRNFSIIA…AIVTKIPPPQ (182 aa)). Residues 84-91 (AHIDHGKS), 149-153 (DTPGH), and 203-206 (NKID) contribute to the GTP site.

Belongs to the TRAFAC class translation factor GTPase superfamily. Classic translation factor GTPase family. LepA subfamily.

Its subcellular location is the plastid. It is found in the chloroplast. It catalyses the reaction GTP + H2O = GDP + phosphate + H(+). Promotes chloroplast protein synthesis. May act as a fidelity factor of the translation reaction, by catalyzing a one-codon backward translocation of tRNAs on improperly translocated ribosomes. This is Translation factor GUF1 homolog, chloroplastic from Oryza sativa subsp. japonica (Rice).